The chain runs to 207 residues: MTIGIHEEQQLWRNGARIVAGVDEVGRGCWAGPVVAAAVSFPTHLLNDPVALAGINDSKTLSAEARQAMAQQIRHLASGIGLGVVSAHLIDLFGIAEATKWAMMHAVLSLPSLPDGLVIDWVKLPELPLLQRSLPKGDAISISVAAASIIAKVYRDNLMHEYDQRDPRYGWAAHKGYGTAQHQRALAAHGPSGLHRRSFKPLAAFVD.

Residues 17-207 enclose the RNase H type-2 domain; the sequence is RIVAGVDEVG…SFKPLAAFVD (191 aa). A divalent metal cation-binding residues include Asp-23, Glu-24, and Asp-120.

This sequence belongs to the RNase HII family. Mn(2+) is required as a cofactor. It depends on Mg(2+) as a cofactor.

The protein resides in the cytoplasm. The enzyme catalyses Endonucleolytic cleavage to 5'-phosphomonoester.. Endonuclease that specifically degrades the RNA of RNA-DNA hybrids. The chain is Ribonuclease HII from Herpetosiphon aurantiacus (strain ATCC 23779 / DSM 785 / 114-95).